Reading from the N-terminus, the 777-residue chain is Polyribonucleotide nucleotidyltransferase (777 aa).

Residues aspartate 494 and aspartate 500 each contribute to the Mg(2+) site. A KH domain is found at 561-620 (PRIITLQIDPSKIGALIGPGGKTIRSIIEQTGAQIDVEDDGRVFVTTPDADGARMAQSLI). Residues 630–699 (GEIFTGKVVR…GTGKLSLSRR (70 aa)) form the S1 motif domain. A disordered region spans residues 703 to 777 (TGETAEQRKS…NDRRGGGFRG (75 aa)). Residues 718-727 (GPRGGGGGGD) are compositionally biased toward gly residues. Composition is skewed to basic and acidic residues over residues 728–761 (RGPR…DRGP) and 768–777 (NDRRGGGFRG).

Belongs to the polyribonucleotide nucleotidyltransferase family. It depends on Mg(2+) as a cofactor.

The protein resides in the cytoplasm. The enzyme catalyses RNA(n+1) + phosphate = RNA(n) + a ribonucleoside 5'-diphosphate. Functionally, involved in mRNA degradation. Catalyzes the phosphorolysis of single-stranded polyribonucleotides processively in the 3'- to 5'-direction. The chain is Polyribonucleotide nucleotidyltransferase from Herpetosiphon aurantiacus (strain ATCC 23779 / DSM 785 / 114-95).